The sequence spans 233 residues: Probable fimbrial chaperone protein ElfD (233 aa).

Positions 1–26 are cleaved as a signal peptide; sequence MKTCITKGIVTVSLTAILLSCSSAWA.

Belongs to the periplasmic pilus chaperone family.

Its subcellular location is the periplasm. Its function is as follows. Part of the elfADCG-ycbUVF fimbrial operon, which promotes adhesion of bacteria to different abiotic surfaces. Could be required for the biogenesis of the ElfA fimbriae. This Escherichia coli (strain K12) protein is Probable fimbrial chaperone protein ElfD (elfD).